The following is a 277-amino-acid chain: uncharacterized protein (277 aa).

Disordered regions lie at residues 1–103 and 254–277; these read PPLR…LEDP and PSPS…SPPR. A compositionally biased stretch (basic and acidic residues) spans 48–65; it reads RRNDTGKDRGTHRQRAET. A compositionally biased stretch (polar residues) spans 66 to 77; that stretch reads PSRSPVPTTNTV. Residues 82-91 show a composition bias toward basic residues; it reads PAVRRQRRTQ.

This is an uncharacterized protein from Homo sapiens (Human).